We begin with the raw amino-acid sequence, 389 residues long: 5-hydroxytryptamine receptor 1B (389 aa).

The disordered stretch occupies residues 1-27; that stretch reads MEETNTHCAPPPPAGSQTGVSQANLSS. Residues 1–45 lie on the Extracellular side of the membrane; the sequence is MEETNTHCAPPPPAGSQTGVSQANLSSAPPNCSTEGYIYQDSIAL. A compositionally biased stretch (polar residues) spans 15 to 27; sequence GSQTGVSQANLSS. N-linked (GlcNAc...) asparagine glycosylation is found at Asn-24 and Asn-31. The chain crosses the membrane as a helical span at residues 46-71; sequence PWKVLLILVLALFTLATTLSNAFVIA. Topologically, residues 72 to 85 are cytoplasmic; the sequence is TVYRTRKLHTPANY. A helical membrane pass occupies residues 86–110; the sequence is LIASLAVTDLLVSILVMPISTMYTV. The Extracellular portion of the chain corresponds to 111 to 118; sequence TGRWTLGQ. A helical membrane pass occupies residues 119 to 144; sequence VVCDFWLSSDITCCTASILHLCVIAL. The cysteines at positions 121 and 198 are disulfide-linked. Ergotamine-binding residues include Asp-128 and Thr-133. A DRY motif; important for ligand-induced conformation changes and signaling motif is present at residues 145–147; that stretch reads DRY. Residues 145 to 164 lie on the Cytoplasmic side of the membrane; sequence DRYWAITDAVEYSAKRTPKR. The helical transmembrane segment at 165–183 threads the bilayer; it reads AAVMIALVWVFSISISLPP. The Extracellular segment spans residues 184–204; sequence FFWRQAKAEEEVSDCRVNTDH. Ergotamine is bound at residue Val-200. A helical membrane pass occupies residues 205 to 228; the sequence is MLYTVYSTVGAFYFPTLLLIALYG. At 229–314 the chain is on the cytoplasmic side; that stretch reads RIYVEARSRI…AARERKATKT (86 aa). Residues 258–271 are compositionally biased toward polar residues; the sequence is DSPGSTSSVTSVNS. The disordered stretch occupies residues 258–281; the sequence is DSPGSTSSVTSVNSRAPDVPSESG. The chain crosses the membrane as a helical span at residues 315–336; it reads LGIILGAFIVCWLPFFIISLVM. Over 337 to 346 the chain is Extracellular; sequence PICKDACWFH. Residues 347–369 form a helical membrane-spanning segment; sequence LAIFDFFTWLGYLNSLINPIIYT. Residues 364–368 carry the NPxxY motif; important for ligand-induced conformation changes and signaling motif; it reads NPIIY. The Cytoplasmic segment spans residues 370 to 389; that stretch reads MSNEDFKQAFHKLIRFKCTG. A lipid anchor (S-palmitoyl cysteine) is attached at Cys-387.

It belongs to the G-protein coupled receptor 1 family. Homodimer. Heterodimer with HTR1D. In terms of processing, phosphorylated. Desensitization of the receptor may be mediated by its phosphorylation. Post-translationally, palmitoylated.

It is found in the cell membrane. Functionally, G-protein coupled receptor for 5-hydroxytryptamine (serotonin). Also functions as a receptor for ergot alkaloid derivatives, various anxiolytic and antidepressant drugs and other psychoactive substances, such as lysergic acid diethylamide (LSD). Ligand binding causes a conformation change that triggers signaling via guanine nucleotide-binding proteins (G proteins) and modulates the activity of downstream effectors, such as adenylate cyclase. HTR1B is coupled to G(i)/G(o) G alpha proteins and mediates inhibitory neurotransmission by inhibiting adenylate cyclase activity. Arrestin family members inhibit signaling via G proteins and mediate activation of alternative signaling pathways. Regulates the release of 5-hydroxytryptamine, dopamine and acetylcholine in the brain, and thereby affects neural activity, nociceptive processing, pain perception, mood and behavior. Besides, plays a role in vasoconstriction of cerebral arteries. The chain is 5-hydroxytryptamine receptor 1B (HTR1B) from Felis catus (Cat).